A 568-amino-acid polypeptide reads, in one-letter code: DNA ligase 2 (568 aa).

Glu254 is an ATP binding site. The active-site N6-AMP-lysine intermediate is Lys256. ATP contacts are provided by Arg261, Arg276, Glu306, Phe346, Arg425, and Lys431.

Belongs to the ATP-dependent DNA ligase family. Mg(2+) is required as a cofactor.

The enzyme catalyses ATP + (deoxyribonucleotide)n-3'-hydroxyl + 5'-phospho-(deoxyribonucleotide)m = (deoxyribonucleotide)n+m + AMP + diphosphate.. In terms of biological role, DNA ligase that seals nicks in double-stranded DNA during DNA replication, DNA recombination and DNA repair. The chain is DNA ligase 2 from Methanosarcina mazei (strain ATCC BAA-159 / DSM 3647 / Goe1 / Go1 / JCM 11833 / OCM 88) (Methanosarcina frisia).